Consider the following 500-residue polypeptide: Protein ASPARTIC PROTEASE IN GUARD CELL 1 (500 aa).

The first 24 residues, 1–24 (MAFPRFLSLLAVVTLSLFLTTTDA), serve as a signal peptide directing secretion. Residues 162–496 (YFSRIGVGTP…DLSKNVIGLS (335 aa)) form the Peptidase A1 domain. The active site involves aspartate 180. 6 disulfide bridges follow: cysteine 190/cysteine 193, cysteine 196/cysteine 271, cysteine 217/cysteine 235, cysteine 222/cysteine 230, cysteine 307/cysteine 500, and cysteine 419/cysteine 461. Aspartate 379 is a catalytic residue.

The protein belongs to the peptidase A1 family. As to expression, expressed in young seedlings, leaves, guard-cells, stems, flowers and siliques, but not in roots or mesophyll cells.

Its subcellular location is the endoplasmic reticulum. Its activity is regulated as follows. Inhibited by pepstatin A. Its function is as follows. Aspartic protease involved in drought avoidance through abscisic acid signaling. The protein is Protein ASPARTIC PROTEASE IN GUARD CELL 1 (ASPG1) of Arabidopsis thaliana (Mouse-ear cress).